Here is a 399-residue protein sequence, read N- to C-terminus: Tryptophan synthase beta chain (399 aa).

K92 bears the N6-(pyridoxal phosphate)lysine mark.

Belongs to the TrpB family. Tetramer of two alpha and two beta chains. Pyridoxal 5'-phosphate is required as a cofactor.

The enzyme catalyses (1S,2R)-1-C-(indol-3-yl)glycerol 3-phosphate + L-serine = D-glyceraldehyde 3-phosphate + L-tryptophan + H2O. It functions in the pathway amino-acid biosynthesis; L-tryptophan biosynthesis; L-tryptophan from chorismate: step 5/5. Its function is as follows. The beta subunit is responsible for the synthesis of L-tryptophan from indole and L-serine. The sequence is that of Tryptophan synthase beta chain from Oceanobacillus iheyensis (strain DSM 14371 / CIP 107618 / JCM 11309 / KCTC 3954 / HTE831).